The following is an 856-amino-acid chain: V-type proton ATPase 116 kDa subunit a 2 (856 aa).

Topologically, residues 1-393 (MGSLFRSESM…DAYGVGSYRE (393 aa)) are cytoplasmic. Residues 394–412 (VNPALFTIITFPFLFAVMF) form a helical membrane-spanning segment. At 413-414 (GD) the chain is on the vacuolar side. A helical membrane pass occupies residues 415-431 (FGHGFVMFLFALLLVLN). Over 432–445 (ENHPRLSQSQEILR) the chain is Cytoplasmic. Residues 446 to 475 (MFFDGRYILLLMGLFSVYTGLIYNDCFSKS) form a helical membrane-spanning segment. Residues 476 to 549 (VNLFGSGWNV…ATNRLTFLNS (74 aa)) lie on the Vacuolar side of the membrane. A helical membrane pass occupies residues 550–569 (FKMKMSVILGIFHMTFGVVL). The Cytoplasmic portion of the chain corresponds to 570–587 (GIFNHLHFRKKFNVYLVS). A helical transmembrane segment spans residues 588 to 608 (VPEILFMLCIFGYLIFMIIYK). Topologically, residues 609 to 651 (WLAYSAETSREAPSILIEFINMFLFPTSKTHGLYPGQAHVQRV) are vacuolar. Residues 652-671 (LVALTVLAVPVLFLGKPLFL) traverse the membrane as a helical segment. Residues 672–739 (LWLHNGRNCF…EILMTQAIHS (68 aa)) lie on the Cytoplasmic side of the membrane. Phosphoserine occurs at positions 695 and 700. Residues 740–764 (IEYCLGCISNTASYLRLWALSLAHA) form a helical membrane-spanning segment. The Vacuolar portion of the chain corresponds to 765 to 785 (QLSDVLWAMLMRVGLRVDTTY). A helical membrane pass occupies residues 786 to 824 (GVLLLLPVMAFFAVLTIFILLVMEGLSAFLHAIRLHWVE). At 825–856 (FQNKFYVGAGTKFVPFSFSLLSSKFSNDDSIA) the chain is on the cytoplasmic side.

The protein belongs to the V-ATPase 116 kDa subunit family. As to quaternary structure, V-ATPase is a heteromultimeric enzyme made up of two complexes: the ATP-hydrolytic V1 complex and the proton translocation V0 complex. The V1 complex consists of three catalytic AB heterodimers that form a heterohexamer, three peripheral stalks each consisting of EG heterodimers, one central rotor including subunits D and F, and the regulatory subunits C and H. The proton translocation complex V0 consists of the proton transport subunit a, a ring of proteolipid subunits c9c'', rotary subunit d, subunits e and f, and the accessory subunits ATP6AP1/Ac45 and ATP6AP2/PRR. Directly interacts with PSCD2 through its N-terminal cytosolic tail in an intra-endosomal acidification-dependent manner. Disruption of this interaction results in the inhibition of endocytosis. Interacts with SPAAR. As to expression, relatively high expression in kidney and liver. Lower levels in the spleen, testis, and skeletal muscle. Also expressed in the thymus.

The protein localises to the cell membrane. Its subcellular location is the endosome membrane. Its function is as follows. Subunit of the V0 complex of vacuolar(H+)-ATPase (V-ATPase), a multisubunit enzyme composed of a peripheral complex (V1) that hydrolyzes ATP and a membrane integral complex (V0) that translocates protons. V-ATPase is responsible for acidifying and maintaining the pH of intracellular compartments and in some cell types, is targeted to the plasma membrane, where it is responsible for acidifying the extracellular environment. Essential component of the endosomal pH-sensing machinery. May play a role in maintaining the Golgi functions, such as glycosylation maturation, by controlling the Golgi pH. In aerobic conditions, involved in intracellular iron homeostasis, thus triggering the activity of Fe(2+) prolyl hydroxylase (PHD) enzymes, and leading to HIF1A hydroxylation and subsequent proteasomal degradation. This chain is V-type proton ATPase 116 kDa subunit a 2 (Atp6v0a2), found in Mus musculus (Mouse).